Here is a 408-residue protein sequence, read N- to C-terminus: Peptidase T (408 aa).

Position 78 (His-78) interacts with Zn(2+). The active site involves Asp-80. Asp-140 serves as a coordination point for Zn(2+). Catalysis depends on Glu-174, which acts as the Proton acceptor. 3 residues coordinate Zn(2+): Glu-175, Asp-197, and His-379.

This sequence belongs to the peptidase M20B family. The cofactor is Zn(2+).

The protein localises to the cytoplasm. It catalyses the reaction Release of the N-terminal residue from a tripeptide.. In terms of biological role, cleaves the N-terminal amino acid of tripeptides. The polypeptide is Peptidase T (Staphylococcus aureus (strain MRSA252)).